The chain runs to 39 residues: Natriuretic peptide TNPc (39 aa).

Cys-9 and Cys-25 are oxidised to a cystine.

This sequence belongs to the natriuretic peptide family. Expressed by the venom gland.

The protein resides in the secreted. In terms of biological role, snake venom natriuretic peptide that exhibits vasoactive and hypotensive activity. Produces a near complete relaxation in pre-contracted aortae by activating the natriuretic peptide receptor 1 (NPR1). Stimulates cGMP production through the natriuretic peptide receptor 1 (NPR1) with high potencies for the rat NPR1 (EC(50)=100 nM), and very weak potencies over human NPR1 (28% activation at 10 uM). In vivo, reduces both systolic and diastolic blood pressure with no effect on heart rate, when intravenously injected in conscious rabbits. Also enhances the bradycardia due to cardiac afferent stimulation (Bezold-Jarisch reflex). This Oxyuranus microlepidotus (Inland taipan) protein is Natriuretic peptide TNPc.